A 70-amino-acid chain; its full sequence is Conotoxin elongated-tx3a-a (70 aa).

The N-terminal stretch at 1–24 is a signal peptide; the sequence is MLKMGVVLFIFLVLFPLATLQLDA. Positions 25–44 are excised as a propeptide; the sequence is DQPVERYAENKQLLSPDERR. 3 disulfides stabilise this stretch: cysteine 55-cysteine 68, cysteine 56-cysteine 66, and cysteine 61-cysteine 69. The residue at position 58 (tryptophan 58) is a 6'-bromotryptophan; partial. Position 69 is a cysteine amide; partial (cysteine 69).

Belongs to the conotoxin M superfamily. Two short peptides are produced from this precursor; Conotoxin tx3a-b is amidated at Cys-69 (but has no bromotryptophan), whereas conotoxin tx3a-a has an unmodified Gly-70 and a bromotryptophan. Two elongated peptides are also produced; Conotoxin elongated-tx3a-b is amidated at Cys-69 (but has no bromotryptophan), whereas conotoxin elongated tx3a-a has an unmodified Gly-70 (but has no bromotryptophan). Post-translationally, ju et al. (2022) describe a disulfide connectivity (C55-C61; C56-C69; C66-C68) that differs from that of Han and colleagues (2006), McDougal et al. (2008), and Ueberheide et al. (2009). In terms of tissue distribution, expressed by the venom duct. Is present in all duct parts with a highest content in part 2 (proximal of the venom bulb) and then decreases in concentration toward the end of the duct.

Its subcellular location is the secreted. In terms of biological role, intracranial injection into mice causes scratching and hyperactivity. In vitro, inhibits proliferation of the mice ovarian cancer cells ID8. The chain is Conotoxin elongated-tx3a-a from Conus textile (Cloth-of-gold cone).